The chain runs to 261 residues: Imidazole glycerol phosphate synthase subunit HisF (261 aa).

Active-site residues include D16 and D135.

Belongs to the HisA/HisF family. Heterodimer of HisH and HisF.

It is found in the cytoplasm. The catalysed reaction is 5-[(5-phospho-1-deoxy-D-ribulos-1-ylimino)methylamino]-1-(5-phospho-beta-D-ribosyl)imidazole-4-carboxamide + L-glutamine = D-erythro-1-(imidazol-4-yl)glycerol 3-phosphate + 5-amino-1-(5-phospho-beta-D-ribosyl)imidazole-4-carboxamide + L-glutamate + H(+). It participates in amino-acid biosynthesis; L-histidine biosynthesis; L-histidine from 5-phospho-alpha-D-ribose 1-diphosphate: step 5/9. In terms of biological role, IGPS catalyzes the conversion of PRFAR and glutamine to IGP, AICAR and glutamate. The HisF subunit catalyzes the cyclization activity that produces IGP and AICAR from PRFAR using the ammonia provided by the HisH subunit. In Mycobacterium sp. (strain JLS), this protein is Imidazole glycerol phosphate synthase subunit HisF.